Here is a 180-residue protein sequence, read N- to C-terminus: Ribosome-recycling factor (180 aa).

This sequence belongs to the RRF family.

The protein localises to the cytoplasm. In terms of biological role, responsible for the release of ribosomes from messenger RNA at the termination of protein biosynthesis. May increase the efficiency of translation by recycling ribosomes from one round of translation to another. In Chlamydia abortus (strain DSM 27085 / S26/3) (Chlamydophila abortus), this protein is Ribosome-recycling factor.